The following is a 630-amino-acid chain: WD repeat-containing protein 26 homolog (630 aa).

Residues 1 to 13 (MQSTSSTSSGSCS) show a composition bias toward low complexity. The interval 1–90 (MQSTSSTSSG…NNRENTSCSG (90 aa)) is disordered. Phosphoserine is present on residues S36 and S40. Polar residues-rich tracts occupy residues 48 to 57 (PSGSSAATNG) and 66 to 75 (IVNNNGSSSR). Residues 96-128 (SNQEIIRLIGQYLHDVGLDKSVQTLMLESGCYL) enclose the LisH domain. One can recognise a CTLH domain in the interval 129–190 (EHPSATKFRE…EHLDDGNPLD (62 aa)). 7 WD repeats span residues 312–351 (DHCD…LTLK), 359–400 (QAQL…LVVK), 404–443 (SLED…VDSW), 445–482 (GVRV…SDFD), 485–524 (REPH…LVRR), 529–569 (RQSN…PLAK), and 572–612 (GHTK…SSAT). The tract at residues 604 to 630 (PKPNGSSATTESDDCSSSSSSSSWNMT) is disordered. Low complexity predominate over residues 609–630 (SSATTESDDCSSSSSSSSWNMT).

It is found in the cytoplasm. Its subcellular location is the mitochondrion. In terms of biological role, G-beta-like protein involved in cell signal transduction. The sequence is that of WD repeat-containing protein 26 homolog from Drosophila melanogaster (Fruit fly).